Here is a 707-residue protein sequence, read N- to C-terminus: Leucine-rich repeat neuronal protein 3 (707 aa).

The N-terminal stretch at 1 to 22 is a signal peptide; it reads MKDAPLQIHVLLGLAITALVQA. An LRRNT domain is found at 23–69; it reads GDKKVDCPQLCTCEIRPWFTPRSIYMEASTVDCNDLGLLNFPARLPA. Residues 23–626 are Extracellular-facing; that stretch reads GDKKVDCPQL…DGKENGKSHT (604 aa). LRR repeat units follow at residues 70-91, 93-114, 117-138, 141-162, 165-186, 189-210, 213-234, 237-258, 261-282, 285-304, 310-332, and 335-358; these read DTQI…TDFP, NLTG…NVQK, QLLS…CLYG, NLQE…AFVG, NLLR…WFEA, NLEI…NFQP, KLRS…ALVG, NLES…ALQK, NLKF…DFSN, HLKE…DSLA, DLRK…AFFR, and KLES…ESLP. N-linked (GlcNAc...) asparagine glycans are attached at residues N93 and N103. An N-linked (GlcNAc...) asparagine glycan is attached at N223. Residues 368–421 form the LRRCT domain; sequence NPIRCDCVIRWINMNKTNIRFMEPDSLFCVDPPEFQGQNVRQVHFRDMMEICLP. A glycan (N-linked (GlcNAc...) asparagine) is linked at N382. Positions 421 to 514 constitute an Ig-like C2-type domain; the sequence is PLIAPESFPS…DLKSIMIKVG (94 aa). The cysteines at positions 444 and 496 are disulfide-linked. Residues N522, N579, and N608 are each glycosylated (N-linked (GlcNAc...) asparagine). Positions 523–614 constitute a Fibronectin type-III domain; the sequence is GSLNIKIRDI…QCVNVTTKSL (92 aa). Residues 627–647 form a helical membrane-spanning segment; it reads VFVACVGGLLGIIGVMCLFGC. The Cytoplasmic portion of the chain corresponds to 648–707; the sequence is VSQEGNCENEHSYTVNHCHKPTLAFSELYPPLINLWESSKEKPASLEVKATAIGVPTSMS.

The protein localises to the membrane. The chain is Leucine-rich repeat neuronal protein 3 (Lrrn3) from Rattus norvegicus (Rat).